Consider the following 538-residue polypeptide: Anti-bacteriophage protein A (538 aa).

In terms of assembly, interacts with AbpB.

Part of an antiviral system composed of AbpA and AbpB; when both are expressed from a plasmid they confer resistance to phages T2, T4, T7 and lambda but not RB32 or RB69. Resistance is temperature dependent, it can be seen at 30 degrees Celsius but not at 37 or 42 degrees Celsius. The system impairs phage but not bacterial DNA synthesis (shown for T4, T7 and lambda). Partially suppressed by mutations in T4 gene 41, a replicative helicase. This is Anti-bacteriophage protein A from Escherichia coli (strain K12).